The primary structure comprises 342 residues: Porphobilinogen deaminase (342 aa).

Cysteine 249 bears the S-(dipyrrolylmethanemethyl)cysteine mark. The segment at alanine 323 to glutamate 342 is disordered.

The protein belongs to the HMBS family. Monomer. Dipyrromethane is required as a cofactor.

The catalysed reaction is 4 porphobilinogen + H2O = hydroxymethylbilane + 4 NH4(+). Its pathway is porphyrin-containing compound metabolism; protoporphyrin-IX biosynthesis; coproporphyrinogen-III from 5-aminolevulinate: step 2/4. In terms of biological role, tetrapolymerization of the monopyrrole PBG into the hydroxymethylbilane pre-uroporphyrinogen in several discrete steps. This is Porphobilinogen deaminase from Paraburkholderia phytofirmans (strain DSM 17436 / LMG 22146 / PsJN) (Burkholderia phytofirmans).